We begin with the raw amino-acid sequence, 186 residues long: Large ribosomal subunit protein uL6 (186 aa).

This sequence belongs to the universal ribosomal protein uL6 family. In terms of assembly, part of the 50S ribosomal subunit.

This protein binds to the 23S rRNA, and is important in its secondary structure. It is located near the subunit interface in the base of the L7/L12 stalk, and near the tRNA binding site of the peptidyltransferase center. This is Large ribosomal subunit protein uL6 from Hyperthermus butylicus (strain DSM 5456 / JCM 9403 / PLM1-5).